The primary structure comprises 163 residues: Probable ribosome biogenesis protein RLP24 (163 aa).

The protein belongs to the eukaryotic ribosomal protein eL24 family. As to quaternary structure, associated with nucleolar and cytoplasmic pre-60S particles. At the end of biogenesis it dissociates from cytoplasmic pre-60S particles and is likely to be exchanged for its ribosomal homolog, RPL24.

It is found in the nucleus. Its subcellular location is the nucleolus. Its function is as follows. Involved in the biogenesis of the 60S ribosomal subunit. Ensures the docking of GTPBP4/NOG1 to pre-60S particles. In Homo sapiens (Human), this protein is Probable ribosome biogenesis protein RLP24 (RSL24D1).